The primary structure comprises 648 residues: Protein teflon (648 aa).

The segment at 33–56 (LYCHFCRDLFTQLPEFLRHLQGAH) adopts a C2H2-type 1 zinc-finger fold. Disordered regions lie at residues 76 to 127 (SGEQ…GSQN) and 146 to 170 (EHIN…NSES). The span at 85–94 (VGHNSSSSDS) shows a compositional bias: polar residues. Residues 96 to 107 (GLAKSEDSRATE) show a composition bias toward basic and acidic residues. The C2H2-type 2; degenerate zinc finger occupies 598–620 (YFCKCCDDIFTLNEDYIRHLVSQ). The segment at 624–647 (YQCTKCIKTFKYQGHYDKHMRTVH) adopts a C2H2-type 3 zinc-finger fold.

It belongs to the Teflon family.

The protein resides in the nucleus. Its subcellular location is the chromosome. In terms of biological role, specifically required in males for proper segregation of autosomal bivalents at meiosis I. Expression is required in the male germ line prior to spermatocyte stage S4. May have a role as a bridging molecule maintaining adhesion to hold autosome bivalents together via heterochromatic connections. The chain is Protein teflon from Drosophila yakuba (Fruit fly).